A 481-amino-acid chain; its full sequence is Adenosylhomocysteinase (481 aa).

Substrate contacts are provided by threonine 65, aspartate 140, and glutamate 200. 201 to 203 contributes to the NAD(+) binding site; it reads TTT. Residues lysine 230 and aspartate 234 each contribute to the substrate site. NAD(+) contacts are provided by residues asparagine 235, 264–269, glutamate 287, asparagine 322, 343–345, and asparagine 393; these read GYGDVG and IGH.

This sequence belongs to the adenosylhomocysteinase family. Requires NAD(+) as cofactor.

It is found in the cytoplasm. The enzyme catalyses S-adenosyl-L-homocysteine + H2O = L-homocysteine + adenosine. The protein operates within amino-acid biosynthesis; L-homocysteine biosynthesis; L-homocysteine from S-adenosyl-L-homocysteine: step 1/1. Functionally, may play a key role in the regulation of the intracellular concentration of adenosylhomocysteine. The protein is Adenosylhomocysteinase of Polynucleobacter necessarius subsp. necessarius (strain STIR1).